A 383-amino-acid chain; its full sequence is Non-structural maintenance of chromosomes element 4 homolog B (383 aa).

Basic and acidic residues predominate over residues 1-22 (MRNSVKWETELTGDRSRRREAD). Disordered stretches follow at residues 1–59 (MRNS…EQGI), 198–231 (MKQR…EKKS), and 355–383 (QGSV…NGGL). Residues 201–212 (RKSRVGNRKRTK) show a composition bias toward basic residues. Residues 355–372 (QGSVIQEETVVEDSSNME) are compositionally biased toward polar residues.

This sequence belongs to the NSE4 family. As to quaternary structure, interacts with SMC5, SMC6A or SMC6B. The SMC5-SMC6 complex is composed of the SMC5 and SMC6 heterodimer attached via their hinge domain and from the non-SMC subunit NSE4A or NSE4B. As to expression, not expressed in seedlings, rosette leaves and floral buds.

The protein localises to the nucleus. Component of the SMC5-SMC6 complex, that promotes sister chromatid alignment after DNA damage and facilitates double-stranded DNA breaks (DSBs) repair via homologous recombination between sister chromatids. In Arabidopsis thaliana (Mouse-ear cress), this protein is Non-structural maintenance of chromosomes element 4 homolog B (NSE4B).